The chain runs to 506 residues: Zinc finger protein MAGPIE (506 aa).

A disordered region spans residues 1-53 (MTTEDQTISSSGGYVQSSSTTDHVDHHHHDQHESLNPPLVKKKRNLPGNPDPE). Residues 9-21 (SSSGGYVQSSSTT) are compositionally biased toward low complexity. A compositionally biased stretch (basic and acidic residues) spans 22–33 (DHVDHHHHDQHE). At Ser-60 the chain carries Phosphoserine. 2 C2H2-type zinc fingers span residues 70-92 (FLCE…RRGH) and 111-141 (YVCP…CRKH). Positions 133–140 (IKKHFCRK) match the Nuclear localization signal motif. The C2H2-type 2; degenerate zinc-finger motif lies at 146-169 (WKCEKCAKRYAVQSDWKAHSKTCG). The Zn(2+) site is built by Cys-148, Cys-151, His-164, Cys-168, Cys-175, Cys-177, His-190, and Cys-194. The CCHC-type 2; atypical zinc-finger motif lies at 173–196 (YRCDCGTIFSRRDSFITHRAFCDA). Residues 183–195 (RRDSFITHRAFCD) form an SHR-binding region.

As to quaternary structure, interacts with SHR, SCR and JKD, but not with itself. Interacts with SIEL. Binds to RGA and SCL3 competitively in the nucleus. Expressed in the ground tissue and stele cells of embryos and 2-days post-germination roots but not in the quiescent center. Detected only in cells that perform asymmetric cell divisions. In roots, present in cortex, endodermis, and pericycle layer.

The protein localises to the nucleus. Transcription factor that regulates tissue boundaries and asymmetric cell division. Contributes to the sequestration of 'SHORT-ROOT' to the nucleus. Interacts with the SCR and MGP promoters. Does not show transcription activity by itself, but regulates the transcription of downstream genes through interaction with other transcription factors. Binds DNA via its zinc fingers. Recognizes and binds to SCL3 promoter sequence 5'-AGACAA-3' to promote its expression when in complex with RGA. Positively involved in gibberellic acid (GA) signaling. The chain is Zinc finger protein MAGPIE from Arabidopsis thaliana (Mouse-ear cress).